A 499-amino-acid polypeptide reads, in one-letter code: Bifunctional purine biosynthesis protein PurH (499 aa).

Positions 1-144 (MIKRALISVF…KNFKDVVVLT (144 aa)) constitute an MGS-like domain.

Belongs to the PurH family.

The catalysed reaction is (6R)-10-formyltetrahydrofolate + 5-amino-1-(5-phospho-beta-D-ribosyl)imidazole-4-carboxamide = 5-formamido-1-(5-phospho-D-ribosyl)imidazole-4-carboxamide + (6S)-5,6,7,8-tetrahydrofolate. The enzyme catalyses IMP + H2O = 5-formamido-1-(5-phospho-D-ribosyl)imidazole-4-carboxamide. Its pathway is purine metabolism; IMP biosynthesis via de novo pathway; 5-formamido-1-(5-phospho-D-ribosyl)imidazole-4-carboxamide from 5-amino-1-(5-phospho-D-ribosyl)imidazole-4-carboxamide (10-formyl THF route): step 1/1. It functions in the pathway purine metabolism; IMP biosynthesis via de novo pathway; IMP from 5-formamido-1-(5-phospho-D-ribosyl)imidazole-4-carboxamide: step 1/1. The chain is Bifunctional purine biosynthesis protein PurH from Clostridium botulinum (strain Hall / ATCC 3502 / NCTC 13319 / Type A).